The sequence spans 621 residues: Chaperone protein HscA homolog (621 aa).

This sequence belongs to the heat shock protein 70 family.

Chaperone involved in the maturation of iron-sulfur cluster-containing proteins. Has a low intrinsic ATPase activity which is markedly stimulated by HscB. The protein is Chaperone protein HscA homolog of Polynucleobacter necessarius subsp. necessarius (strain STIR1).